The sequence spans 493 residues: Cyclin-dependent kinase-like 2 (493 aa).

Residues 4–287 form the Protein kinase domain; the sequence is YENLGLVGEG…CAELLHHDFF (284 aa). Residues 10-18 and lysine 33 contribute to the ATP site; that span reads VGEGSYGMV. Positions 45-51 match the [NKR]KIAxRE motif; it reads KKIAMRE. Residue aspartate 126 is the Proton acceptor of the active site. The interval 363-384 is disordered; that stretch reads GEKAEKGNRASNASCLHDSRTS.

This sequence belongs to the protein kinase superfamily. CMGC Ser/Thr protein kinase family. CDC2/CDKX subfamily. Expressed in testis and kidney, and at lower level in brain and lung.

It is found in the cytoplasm. The protein resides in the nucleus. The enzyme catalyses L-seryl-[protein] + ATP = O-phospho-L-seryl-[protein] + ADP + H(+). It catalyses the reaction L-threonyl-[protein] + ATP = O-phospho-L-threonyl-[protein] + ADP + H(+). The chain is Cyclin-dependent kinase-like 2 from Homo sapiens (Human).